The chain runs to 1200 residues: PAN2-PAN3 deadenylation complex catalytic subunit Pan2 (1200 aa).

4 WD repeats span residues 153–193 (DENE…QKYA), 195–231 (ETPGVTIMRQTNRFFFCGHTSGKVSLRDLRSFKVEHE), 244–280 (VHGNLLAACGFSSRLTGLACDRFLKVYDLRMMRAITP), and 328–367 (PVGPLLMTFDVSASKQALAFGDSEGCVHLWTDSPEPSFNP). Positions 368–484 (YSRETEFALP…PTGREEEPLH (117 aa)) are linker. Residues 485–923 (TVSKKYRKVT…VPAILYYVKR (439 aa)) enclose the USP domain. A Phosphoserine modification is found at Ser-784. Residues 974 to 1146 (VGLDAEFVTL…EDARTALQLY (173 aa)) enclose the Exonuclease domain. The a divalent metal cation site is built by Asp-977, Glu-979, Asp-1086, and Asp-1138. The residue at position 1188 (Ser-1188) is a Phosphoserine.

The protein belongs to the peptidase C19 family. PAN2 subfamily. As to quaternary structure, forms a heterotrimer with an asymmetric homodimer of the regulatory subunit PAN3 to form the poly(A)-nuclease (PAN) deadenylation complex. Interacts with PAN3 isoform 1/Pan3L and isoform 3/Pan3S. Interacts with ZFP36. A divalent metal cation is required as a cofactor.

It localises to the cytoplasm. It is found in the P-body. Its subcellular location is the nucleus. It carries out the reaction Exonucleolytic cleavage of poly(A) to 5'-AMP.. With respect to regulation, positively regulated by the regulatory subunit PAN3. Catalytic subunit of the poly(A)-nuclease (PAN) deadenylation complex, one of two cytoplasmic mRNA deadenylases involved in general and miRNA-mediated mRNA turnover. PAN specifically shortens poly(A) tails of RNA and the activity is stimulated by poly(A)-binding protein (PABP). PAN deadenylation is followed by rapid degradation of the shortened mRNA tails by the CCR4-NOT complex. Deadenylated mRNAs are then degraded by two alternative mechanisms, namely exosome-mediated 3'-5' exonucleolytic degradation, or deadenylation-dependent mRNA decaping and subsequent 5'-3' exonucleolytic degradation by XRN1. Also acts as an important regulator of the HIF1A-mediated hypoxic response. Required for HIF1A mRNA stability independent of poly(A) tail length regulation. The sequence is that of PAN2-PAN3 deadenylation complex catalytic subunit Pan2 from Mus musculus (Mouse).